Here is a 75-residue protein sequence, read N- to C-terminus: Acyl carrier protein (75 aa).

Residues 1–75 (MIFEKVRDII…DVVEYLSNLE (75 aa)) enclose the Carrier domain. Residue S35 is modified to O-(pantetheine 4'-phosphoryl)serine.

Belongs to the acyl carrier protein (ACP) family. Post-translationally, 4'-phosphopantetheine is transferred from CoA to a specific serine of apo-ACP by AcpS. This modification is essential for activity because fatty acids are bound in thioester linkage to the sulfhydryl of the prosthetic group.

It is found in the cytoplasm. The protein operates within lipid metabolism; fatty acid biosynthesis. Functionally, carrier of the growing fatty acid chain in fatty acid biosynthesis. The protein is Acyl carrier protein of Thermoanaerobacter pseudethanolicus (strain ATCC 33223 / 39E) (Clostridium thermohydrosulfuricum).